Consider the following 128-residue polypeptide: DELTA-urthionin-Uf1a (128 aa).

The N-terminal stretch at 1 to 24 (MEGKTVIVSLLLLSIVVGQIQVEA) is a signal peptide. Disulfide bonds link Cys-27–Cys-64, Cys-28–Cys-56, and Cys-40–Cys-50. A propeptide spans 67–128 (LSIPEVTGEA…LCTKNSIETA (62 aa)) (acidic domain).

The protein belongs to the plant thionin (TC 1.C.44) family. In terms of tissue distribution, expressed in trichomes, that are stiff epidermal hairs located on the surface of petioles and leaves.

It is found in the secreted. Its function is as follows. Plant defense protein that causes pain by probable disruption of cell membranes. Shows cytotoxic activity against the neuroblastoma cell line SH-SY5Y and slightly weaker activity against several non-neuronal cell lines. In vivo, intraplantar injection into mice causes several nocifensive responses, along with swelling and redness. The sequence is that of DELTA-urthionin-Uf1a from Urtica ferox (Tree nettle).